We begin with the raw amino-acid sequence, 228 residues long: MLLPIPDVLSPAQLSQLRAQLDVADWADGRITAGHQSAQAKDNAQLPEDSAVAREAGALVLEALARSSTFFSAVLPRRIYPPLFNRYSGGQSFGYHVDNAVRYDRSRGGAEAVRTDVSATLFLSDPDSYDGGELVIEDTYGTQSVKLPAGHLVIYPGTSLHRVMPVTRGARVACFFWAQSMLRDAAQRRLLFELDVSIRRLTQDTPGHPSLIQLTGVYHNLLRQWADV.

Residues 78–180 (RIYPPLFNRY…RVACFFWAQS (103 aa)) form the Fe2OG dioxygenase domain. Residues His96, Asp98, and His161 each contribute to the Fe cation site. Position 171 (Arg171) interacts with 2-oxoglutarate.

It depends on Fe(2+) as a cofactor. L-ascorbate is required as a cofactor.

The chain is PKHD-type hydroxylase XAC2942 from Xanthomonas axonopodis pv. citri (strain 306).